The sequence spans 159 residues: 6,7-dimethyl-8-ribityllumazine synthase (159 aa).

5-amino-6-(D-ribitylamino)uracil-binding positions include Phe-23, 61 to 63 (SFE), and 85 to 87 (AVI). 90 to 91 (DT) serves as a coordination point for (2S)-2-hydroxy-3-oxobutyl phosphate. His-93 acts as the Proton donor in catalysis. A 5-amino-6-(D-ribitylamino)uracil-binding site is contributed by Phe-118. Residue Arg-132 participates in (2S)-2-hydroxy-3-oxobutyl phosphate binding.

Belongs to the DMRL synthase family.

The enzyme catalyses (2S)-2-hydroxy-3-oxobutyl phosphate + 5-amino-6-(D-ribitylamino)uracil = 6,7-dimethyl-8-(1-D-ribityl)lumazine + phosphate + 2 H2O + H(+). Its pathway is cofactor biosynthesis; riboflavin biosynthesis; riboflavin from 2-hydroxy-3-oxobutyl phosphate and 5-amino-6-(D-ribitylamino)uracil: step 1/2. Functionally, catalyzes the formation of 6,7-dimethyl-8-ribityllumazine by condensation of 5-amino-6-(D-ribitylamino)uracil with 3,4-dihydroxy-2-butanone 4-phosphate. This is the penultimate step in the biosynthesis of riboflavin. The protein is 6,7-dimethyl-8-ribityllumazine synthase of Synechococcus sp. (strain RCC307).